Here is a 208-residue protein sequence, read N- to C-terminus: MAKFIKSAHYFDQYPIDKQFEICVIGRSNVGKSSLINALANKKIARTSNTPGRTQLVNFFDFNNFRLVDLPGYGFAKVSKEKQTDLAAIIDQYLGYRQNLCAVFQICDINVLTNDDVEMSRYFENQKYAHFVVLNKLDKVNKSYFNNNKHKIAKFLNISTDRLLCVSAQNNINIITLFALMKKVVIQAKQEKILSKKEEKMSSEEEIK.

Positions 18 to 187 constitute an EngB-type G domain; that stretch reads KQFEICVIGR…FALMKKVVIQ (170 aa). Residues 26-33, 52-56, 69-72, 135-138, and 166-168 contribute to the GTP site; these read GRSNVGKS, GRTQL, DLPG, NKLD, and VSA. Mg(2+) contacts are provided by S33 and T54.

It belongs to the TRAFAC class TrmE-Era-EngA-EngB-Septin-like GTPase superfamily. EngB GTPase family. Requires Mg(2+) as cofactor.

In terms of biological role, necessary for normal cell division and for the maintenance of normal septation. In Ureaplasma parvum serovar 3 (strain ATCC 27815 / 27 / NCTC 11736), this protein is Probable GTP-binding protein EngB.